The sequence spans 332 residues: Putative peptide import ATP-binding protein BMEII0206 (332 aa).

One can recognise an ABC transporter domain in the interval 11–261 (LEVSNLSVDF…PLHPYTEGLL (251 aa)). An ATP-binding site is contributed by 47–54 (GESGSGKS).

This sequence belongs to the ABC transporter superfamily. The complex is composed of two ATP-binding proteins (BMEII0205 and BMEII0206), two transmembrane proteins (BMEII0207/BMEII0208 and BMEII0209) and a solute-binding protein (BMEII0210).

Its subcellular location is the cell inner membrane. In terms of biological role, probably part of an ABC transporter complex that could be involved in peptide import. Probably responsible for energy coupling to the transport system. The sequence is that of Putative peptide import ATP-binding protein BMEII0206 from Brucella melitensis biotype 1 (strain ATCC 23456 / CCUG 17765 / NCTC 10094 / 16M).